Reading from the N-terminus, the 382-residue chain is Beta-lactamase CMY-10 (382 aa).

Residues 1–23 (MQQRQSILWGAVATLMWAGLAHA) form the signal peptide. The active-site Acyl-ester intermediate is S88. S88 serves as a coordination point for AMP. GMP is bound by residues S88, Q144, Y174, T336, S338, and N363. IMP is bound by residues S88, Q144, Y174, T336, S338, and N363. An AMP-binding site is contributed by Y174. AMP is bound at residue S338.

This sequence belongs to the class-C beta-lactamase family. As to quaternary structure, monomer.

The enzyme catalyses a beta-lactam + H2O = a substituted beta-amino acid. Its activity is regulated as follows. Inhibited by various nucleotides in vitro, including adenosine 5'-(P-acetyl)monophosphate (acAMP), inosine-5'-monophosphate (IMP) and guanosine-5'-monophosphate (GMP); IMP and GMP exhibit strongest competitive inhibition. Inhibited by the beta-lactamase-blocking agent, avibactam. Inhibited by clavulanic acid. Weakly inhibited by citric acid. Class C beta-lactamase which confers resistance to penicillins and cephalosporins. Has benzylpenicillin-, ceftazidime-, nitrocefin- and imipenem-hydrolyzing activity. This Klebsiella aerogenes (Enterobacter aerogenes) protein is Beta-lactamase CMY-10.